The sequence spans 390 residues: 4-hydroxy-3-methylbut-2-en-1-yl diphosphate synthase (flavodoxin) (390 aa).

[4Fe-4S] cluster contacts are provided by Cys281, Cys284, Cys316, and Glu323.

Belongs to the IspG family. [4Fe-4S] cluster serves as cofactor.

The catalysed reaction is (2E)-4-hydroxy-3-methylbut-2-enyl diphosphate + oxidized [flavodoxin] + H2O + 2 H(+) = 2-C-methyl-D-erythritol 2,4-cyclic diphosphate + reduced [flavodoxin]. It participates in isoprenoid biosynthesis; isopentenyl diphosphate biosynthesis via DXP pathway; isopentenyl diphosphate from 1-deoxy-D-xylulose 5-phosphate: step 5/6. Functionally, converts 2C-methyl-D-erythritol 2,4-cyclodiphosphate (ME-2,4cPP) into 1-hydroxy-2-methyl-2-(E)-butenyl 4-diphosphate. This chain is 4-hydroxy-3-methylbut-2-en-1-yl diphosphate synthase (flavodoxin), found in Salinispora arenicola (strain CNS-205).